Consider the following 120-residue polypeptide: Small ribosomal subunit protein uS13 (120 aa).

Residues 96–120 (PCRGQRTRTNARTRKGPRKAIAGKK) form a disordered region.

It belongs to the universal ribosomal protein uS13 family. Part of the 30S ribosomal subunit. Forms a loose heterodimer with protein S19. Forms two bridges to the 50S subunit in the 70S ribosome.

Located at the top of the head of the 30S subunit, it contacts several helices of the 16S rRNA. In the 70S ribosome it contacts the 23S rRNA (bridge B1a) and protein L5 of the 50S subunit (bridge B1b), connecting the 2 subunits; these bridges are implicated in subunit movement. Contacts the tRNAs in the A and P-sites. The chain is Small ribosomal subunit protein uS13 from Dechloromonas aromatica (strain RCB).